Here is a 169-residue protein sequence, read N- to C-terminus: Aspartic protease inhibitor 6 (169 aa).

Asn1 carries an N-linked (GlcNAc...) asparagine glycan. 2 cysteine pairs are disulfide-bonded: Cys30–Cys75 and Cys124–Cys134.

Belongs to the protease inhibitor I3 (leguminous Kunitz-type inhibitor) family.

The protein resides in the vacuole. Functionally, inhibitor of cathepsin D (aspartic protease). May also inhibit trypsin and chymotrypsin (serine proteases). Protects the plant by inhibiting proteases of invading organisms. In Solanum tuberosum (Potato), this protein is Aspartic protease inhibitor 6.